Reading from the N-terminus, the 245-residue chain is Leucyl/phenylalanyl-tRNA--protein transferase (245 aa).

Belongs to the L/F-transferase family.

It is found in the cytoplasm. The enzyme catalyses N-terminal L-lysyl-[protein] + L-leucyl-tRNA(Leu) = N-terminal L-leucyl-L-lysyl-[protein] + tRNA(Leu) + H(+). It catalyses the reaction N-terminal L-arginyl-[protein] + L-leucyl-tRNA(Leu) = N-terminal L-leucyl-L-arginyl-[protein] + tRNA(Leu) + H(+). It carries out the reaction L-phenylalanyl-tRNA(Phe) + an N-terminal L-alpha-aminoacyl-[protein] = an N-terminal L-phenylalanyl-L-alpha-aminoacyl-[protein] + tRNA(Phe). Functionally, functions in the N-end rule pathway of protein degradation where it conjugates Leu, Phe and, less efficiently, Met from aminoacyl-tRNAs to the N-termini of proteins containing an N-terminal arginine or lysine. This is Leucyl/phenylalanyl-tRNA--protein transferase from Paraburkholderia xenovorans (strain LB400).